The following is a 418-amino-acid chain: Pyruvate decarboxylase 1 (418 aa).

Residue His-59 participates in substrate binding. The segment at 337–418 (DSWFNCQKLK…IFLINNGGYT (82 aa)) is thiamine pyrophosphate binding. The Mg(2+) site is built by Asp-387, Asn-414, and Gly-416.

This sequence belongs to the TPP enzyme family. As to quaternary structure, homotetramer. A metal cation is required as a cofactor. The cofactor is thiamine diphosphate. In terms of tissue distribution, leaves.

The enzyme catalyses a 2-oxocarboxylate + H(+) = an aldehyde + CO2. The sequence is that of Pyruvate decarboxylase 1 (PDC1) from Nicotiana tabacum (Common tobacco).